Consider the following 1084-residue polypeptide: CRISPR-associated endonuclease Cas9 (1084 aa).

The For RuvC-like nuclease domain role is filled by Asp8. Residues Asp8, Glu496, and Glu500 each coordinate Mn(2+). An HNH Cas9-type domain is found at 504-665 (TEKRAREMDG…MDEEIDARSM (162 aa)). Residue His573 is the Proton acceptor for HNH nuclease domain of the active site. His727 provides a ligand contact to Mn(2+).

It belongs to the CRISPR-associated protein Cas9 family. Subtype II-C subfamily. As to quaternary structure, monomer. Binds crRNA and tracrRNA. It depends on Mg(2+) as a cofactor.

Functionally, CRISPR (clustered regularly interspaced short palindromic repeat) is an adaptive immune system that provides protection against mobile genetic elements (viruses, transposable elements and conjugative plasmids). CRISPR clusters contain spacers, sequences complementary to antecedent mobile elements, and target invading nucleic acids. CRISPR clusters are transcribed and processed into CRISPR RNA (crRNA). In type II CRISPR systems correct processing of pre-crRNA requires a trans-encoded small RNA (tracrRNA), endogenous ribonuclease 3 (rnc) and this protein. The tracrRNA serves as a guide for ribonuclease 3-aided processing of pre-crRNA. Subsequently Cas9/crRNA/tracrRNA endonucleolytically cleaves linear or circular dsDNA target complementary to the spacer; Cas9 is inactive in the absence of the 2 guide RNAs (gRNA). Cas9 recognizes the protospacer adjacent motif (PAM) in the CRISPR repeat sequences to help distinguish self versus nonself, as targets within the bacterial CRISPR locus do not have PAMs. PAM recognition is also required for catalytic activity. This is CRISPR-associated endonuclease Cas9 from Corynebacterium diphtheriae (strain ATCC 700971 / NCTC 13129 / Biotype gravis).